Reading from the N-terminus, the 500-residue chain is Aspartyl/glutamyl-tRNA(Asn/Gln) amidotransferase subunit B (500 aa).

Belongs to the GatB/GatE family. GatB subfamily. Heterotrimer of A, B and C subunits.

It catalyses the reaction L-glutamyl-tRNA(Gln) + L-glutamine + ATP + H2O = L-glutaminyl-tRNA(Gln) + L-glutamate + ADP + phosphate + H(+). The catalysed reaction is L-aspartyl-tRNA(Asn) + L-glutamine + ATP + H2O = L-asparaginyl-tRNA(Asn) + L-glutamate + ADP + phosphate + 2 H(+). Allows the formation of correctly charged Asn-tRNA(Asn) or Gln-tRNA(Gln) through the transamidation of misacylated Asp-tRNA(Asn) or Glu-tRNA(Gln) in organisms which lack either or both of asparaginyl-tRNA or glutaminyl-tRNA synthetases. The reaction takes place in the presence of glutamine and ATP through an activated phospho-Asp-tRNA(Asn) or phospho-Glu-tRNA(Gln). This chain is Aspartyl/glutamyl-tRNA(Asn/Gln) amidotransferase subunit B, found in Rhizobium leguminosarum bv. trifolii (strain WSM2304).